The sequence spans 233 residues: Orotidine 5'-phosphate decarboxylase (233 aa).

Residues Asp-13, Lys-35, 62–71 (DLKFHDIPNT), Thr-122, Arg-182, Gln-191, Gly-211, and Arg-212 contribute to the substrate site. Catalysis depends on Lys-64, which acts as the Proton donor.

The protein belongs to the OMP decarboxylase family. Type 1 subfamily. Homodimer.

The enzyme catalyses orotidine 5'-phosphate + H(+) = UMP + CO2. The protein operates within pyrimidine metabolism; UMP biosynthesis via de novo pathway; UMP from orotate: step 2/2. Catalyzes the decarboxylation of orotidine 5'-monophosphate (OMP) to uridine 5'-monophosphate (UMP). This chain is Orotidine 5'-phosphate decarboxylase, found in Pseudomonas entomophila (strain L48).